The sequence spans 400 residues: Phosphoglycerate kinase (400 aa).

Substrate-binding positions include 23–25 (DLN), arginine 38, 61–64 (HFGR), arginine 120, and arginine 153. ATP is bound by residues lysine 203, glutamate 325, and 355-358 (GGDT).

It belongs to the phosphoglycerate kinase family. As to quaternary structure, monomer.

The protein resides in the cytoplasm. The catalysed reaction is (2R)-3-phosphoglycerate + ATP = (2R)-3-phospho-glyceroyl phosphate + ADP. The protein operates within carbohydrate degradation; glycolysis; pyruvate from D-glyceraldehyde 3-phosphate: step 2/5. In Methylobacterium radiotolerans (strain ATCC 27329 / DSM 1819 / JCM 2831 / NBRC 15690 / NCIMB 10815 / 0-1), this protein is Phosphoglycerate kinase.